The following is a 653-amino-acid chain: Serine/threonine-protein phosphatase with EF-hands 1 (653 aa).

Residues 16–45 enclose the IQ domain; the sequence is SLRAALIIQNWYRGYKARLKARQHYALTIF. Positions 121–455 are catalytic; sequence IDLLLEAFKE…PRFFQYQVTK (335 aa). 4 residues coordinate Mn(2+): Asp-172, His-174, Asp-201, and Asn-233. His-234 serves as the catalytic Proton donor. Residues His-285 and His-403 each contribute to the Mn(2+) site. EF-hand domains follow at residues 483–518, 566–601, and 606–641; these read SRKSDLTRAFQLQDHRKSGKLSVSQWAFCMENILGL, RYRSDLEIIFNAIDTDHSGLISVEEFRAMWKLFSSH, and IDDSQVNKLANIMDLNKDGSIDFNEFLKAFYVVHRY. Ca(2+) contacts are provided by Asp-579, Asp-581, Ser-583, Glu-590, Asp-619, Asn-621, Asp-623, Ser-625, and Glu-630.

It belongs to the PPP phosphatase family. Mn(2+) is required as a cofactor. It depends on Mg(2+) as a cofactor. Detected in retina and retinal derived Y-79 retinoblastoma cells. Also found in fetal brain.

It carries out the reaction O-phospho-L-seryl-[protein] + H2O = L-seryl-[protein] + phosphate. It catalyses the reaction O-phospho-L-threonyl-[protein] + H2O = L-threonyl-[protein] + phosphate. Its activity is regulated as follows. Activated by calcium. In terms of biological role, may have a role in the recovery or adaptation response of photoreceptors. May have a role in development. The chain is Serine/threonine-protein phosphatase with EF-hands 1 (PPEF1) from Homo sapiens (Human).